The chain runs to 384 residues: S-adenosylmethionine synthase (384 aa).

Position 15 (His15) interacts with ATP. Asp17 provides a ligand contact to Mg(2+). A K(+)-binding site is contributed by Glu43. The L-methionine site is built by Glu56 and Gln99. The tract at residues 99–109 is flexible loop; it reads QSPDINQGVDR. ATP is bound by residues 164–166, 230–231, Asp239, 245–246, Ala262, and Lys266; these read DAK, RF, and RK. Residue Asp239 participates in L-methionine binding. Residue Lys270 participates in L-methionine binding.

The protein belongs to the AdoMet synthase family. As to quaternary structure, homotetramer; dimer of dimers. Mg(2+) is required as a cofactor. The cofactor is K(+).

Its subcellular location is the cytoplasm. It catalyses the reaction L-methionine + ATP + H2O = S-adenosyl-L-methionine + phosphate + diphosphate. It participates in amino-acid biosynthesis; S-adenosyl-L-methionine biosynthesis; S-adenosyl-L-methionine from L-methionine: step 1/1. Its function is as follows. Catalyzes the formation of S-adenosylmethionine (AdoMet) from methionine and ATP. The overall synthetic reaction is composed of two sequential steps, AdoMet formation and the subsequent tripolyphosphate hydrolysis which occurs prior to release of AdoMet from the enzyme. This Salmonella agona (strain SL483) protein is S-adenosylmethionine synthase.